A 436-amino-acid chain; its full sequence is GTPase Der (436 aa).

EngA-type G domains lie at 3 to 168 and 177 to 352; these read PLVA…EEKS and IRLA…EQRS. GTP-binding positions include 9–16, 56–60, 120–123, 183–190, 230–234, and 295–298; these read GRPNVGKS, DTGGY, NKVE, DTAGL, and NKWD. Residues 353 to 436 enclose the KH-like domain; it reads QQITTSDLNR…VPFSLRFMQK (84 aa).

Belongs to the TRAFAC class TrmE-Era-EngA-EngB-Septin-like GTPase superfamily. EngA (Der) GTPase family. As to quaternary structure, associates with the 50S ribosomal subunit.

Functionally, GTPase that plays an essential role in the late steps of ribosome biogenesis. In Prosthecochloris aestuarii (strain DSM 271 / SK 413), this protein is GTPase Der.